The sequence spans 382 residues: MRLSTHPTLDRFDAVPAASYRPGHGAVRAWLYLLAVLVVAMVAVGGATRLTGSGLSITEWRPVTGVVPPLDAADWAVEFDKYRDTPQYRILNQGIGLDGFKTLYWWEWGHRLLGRIVGLVFFLPFAWFWARGMLGRRLLLGLLGLGLLGGLQGAIGWIMVASGLQPGMTAVAPLKLALHLTTASLILAGLVWLAAGTRPRALAPAPEPVRVVAGLLPALVLVQIWLGGLVAGSKAGLLYNTWPDMDGVLVPPARVLFDKVPFIENFIDNLALVQFNHRLFAYLVVVVAIAHAIQAARTASGSAAAGRAMGLAALATAQMGLGIATLLLHVPLWAGLAHQVFAMAVLIMATVHARLARGVPAATAPTGAEVPIGLEALAGRGA.

Helical transmembrane passes span 25-45 (GAVRAWLYLLAVLVVAMVAVG), 112-132 (LLGRIVGLVFFLPFAWFWARG), 138-158 (LLLGLLGLGLLGGLQGAIGWI), 176-196 (LALHLTTASLILAGLVWLAAG), 211-231 (VVAGLLPALVLVQIWLGGLVA), 270-290 (LALVQFNHRLFAYLVVVVAIA), 303-323 (AAAGRAMGLAALATAQMGLGI), and 327-347 (LLHVPLWAGLAHQVFAMAVLI). His277 lines the heme pocket. His338 lines the heme pocket.

The protein belongs to the COX15/CtaA family. Type 2 subfamily. As to quaternary structure, interacts with CtaB. Requires heme b as cofactor.

It is found in the cell membrane. It catalyses the reaction Fe(II)-heme o + 2 A + H2O = Fe(II)-heme a + 2 AH2. It functions in the pathway porphyrin-containing compound metabolism; heme A biosynthesis; heme A from heme O: step 1/1. In terms of biological role, catalyzes the conversion of heme O to heme A by two successive hydroxylations of the methyl group at C8. The first hydroxylation forms heme I, the second hydroxylation results in an unstable dihydroxymethyl group, which spontaneously dehydrates, resulting in the formyl group of heme A. The chain is Heme A synthase from Methylorubrum extorquens (strain PA1) (Methylobacterium extorquens).